Reading from the N-terminus, the 83-residue chain is Small cysteine-rich protein 3 (83 aa).

The N-terminal stretch at 1–21 (MGVKLNICLLLLLVAIISSQG) is a signal peptide. The propeptide occupies 22 to 39 (FNLRKKEDSKDEKPFGNY). The segment covering 25–35 (RKKEDSKDEKP) has biased composition (basic and acidic residues). Positions 25–44 (RKKEDSKDEKPFGNYRRGSP) are disordered.

The protein belongs to the Cnidaria small cysteine-rich protein (SCRiP) family. alpha subfamily. Post-translationally, contains 4 disulfide bonds.

It localises to the secreted. Its subcellular location is the nematocyst. Functionally, this recombinant protein induces severe neurotoxicity on zebrafish larvae (Danio rerio) at a concentration of 230 mg/ml, but does not show toxicity when injected in blowfly larvae (Sarcophaga falculata). All fish incubated with this protein died within 16 hours of exposure. Has also been claimed to be implied in calcification, but this function seems improbable. The chain is Small cysteine-rich protein 3 from Acropora millepora (Staghorn coral).